A 159-amino-acid polypeptide reads, in one-letter code: MINYLKSFFLYEIIRGMTLTLKYFFKPKVTINYPYEKSPVSPRFKGEHALRRYENGEERCIACKLCEAICPAQAIVIESDERDDGSRRTTRYDIDMTKCIYCGLCQEACPVDAIVEGPNFEFASLTHTALIYDKERLLNNGDKWEQALANKLHKDYQYR.

4Fe-4S ferredoxin-type domains follow at residues 51 to 80 and 90 to 119; these read RRYE…IESD and TRYD…EGPN. Cysteine 60, cysteine 63, cysteine 66, cysteine 70, cysteine 99, cysteine 102, cysteine 105, and cysteine 109 together coordinate [4Fe-4S] cluster.

This sequence belongs to the complex I 23 kDa subunit family. In terms of assembly, NDH-1 is composed of 14 different subunits. Subunits NuoA, H, J, K, L, M, N constitute the membrane sector of the complex. Requires [4Fe-4S] cluster as cofactor.

The protein resides in the cell inner membrane. It catalyses the reaction a quinone + NADH + 5 H(+)(in) = a quinol + NAD(+) + 4 H(+)(out). Its function is as follows. NDH-1 shuttles electrons from NADH, via FMN and iron-sulfur (Fe-S) centers, to quinones in the respiratory chain. The immediate electron acceptor for the enzyme in this species is believed to be ubiquinone. Couples the redox reaction to proton translocation (for every two electrons transferred, four hydrogen ions are translocated across the cytoplasmic membrane), and thus conserves the redox energy in a proton gradient. This Rickettsia prowazekii (strain Madrid E) protein is NADH-quinone oxidoreductase subunit I.